The primary structure comprises 234 residues: Peptidase E (234 aa).

Catalysis depends on charge relay system residues Ser-123, Asp-138, and His-160.

Belongs to the peptidase S51 family.

It is found in the cytoplasm. It catalyses the reaction Dipeptidase E catalyzes the hydrolysis of dipeptides Asp-|-Xaa. It does not act on peptides with N-terminal Glu, Asn or Gln, nor does it cleave isoaspartyl peptides.. Its function is as follows. Hydrolyzes dipeptides containing N-terminal aspartate residues. May play a role in allowing the cell to use peptide aspartate to spare carbon otherwise required for the synthesis of the aspartate family of amino acids. The polypeptide is Peptidase E (Actinobacillus pleuropneumoniae serotype 5b (strain L20)).